The following is a 430-amino-acid chain: Pre-B-cell leukemia transcription factor 2 (430 aa).

Positions 1–52 (MDERLLGPPPPGGGRGGLGLVGAEPGGPGEPPGGGDPGGGSGGVPGGRGKQD) are disordered. Residues 13–48 (GGRGGLGLVGAEPGGPGEPPGGGDPGGGSGGVPGGR) show a composition bias toward gly residues. A PBC domain is found at 48–243 (RGKQDIGDIL…VMILRSRFLD (196 aa)). The tract at residues 55-134 (DILQQIMTIT…EGVAGPEKGG (80 aa)) is PBC-A. A phosphoserine mark is found at Ser-136, Ser-151, and Ser-159. The segment at 137 to 243 (AAAAAAAAAS…VMILRSRFLD (107 aa)) is PBC-B. Positions 244 to 306 (ARRKRRNFSK…NKRIRYKKNI (63 aa)) form a DNA-binding region, homeobox; TALE-type. 2 disordered regions span residues 327–347 (GGHS…GGSF) and 375–430 (LRHS…DTSN). Residues Ser-330 and Ser-395 each carry the phosphoserine modification. Over residues 409-418 (VTPSSVTSPT) the composition is skewed to polar residues.

Belongs to the TALE/PBX homeobox family. As to quaternary structure, forms heterodimers with MEIS1 and heterotrimers with MEIS1 and HOXA9. Interacts with PBXIP1.

The protein localises to the nucleus. Its function is as follows. Transcriptional activator that binds the sequence 5'-ATCAATCAA-3'. Activates transcription of PF4 in complex with MEIS1. This chain is Pre-B-cell leukemia transcription factor 2 (Pbx2), found in Mus musculus (Mouse).